We begin with the raw amino-acid sequence, 340 residues long: Arginine N-succinyltransferase subunit beta (340 aa).

Belongs to the succinylarginine dihydrolase family. In terms of assembly, heterotetramer of two alpha and two beta subunits.

It carries out the reaction succinyl-CoA + L-arginine = N(2)-succinyl-L-arginine + CoA + H(+). The protein operates within amino-acid degradation; L-arginine degradation via AST pathway; L-glutamate and succinate from L-arginine: step 1/5. The sequence is that of Arginine N-succinyltransferase subunit beta (aruG) from Pseudomonas aeruginosa (strain ATCC 15692 / DSM 22644 / CIP 104116 / JCM 14847 / LMG 12228 / 1C / PRS 101 / PAO1).